Here is a 320-residue protein sequence, read N- to C-terminus: o-succinylbenzoate synthase (320 aa).

Lys133 acts as the Proton donor in catalysis. Residues Asp161, Glu190, and Asp213 each coordinate Mg(2+). Lys235 serves as the catalytic Proton acceptor.

The protein belongs to the mandelate racemase/muconate lactonizing enzyme family. MenC type 1 subfamily. Requires a divalent metal cation as cofactor.

It carries out the reaction (1R,6R)-6-hydroxy-2-succinyl-cyclohexa-2,4-diene-1-carboxylate = 2-succinylbenzoate + H2O. Its pathway is quinol/quinone metabolism; 1,4-dihydroxy-2-naphthoate biosynthesis; 1,4-dihydroxy-2-naphthoate from chorismate: step 4/7. It functions in the pathway quinol/quinone metabolism; menaquinone biosynthesis. Converts 2-succinyl-6-hydroxy-2,4-cyclohexadiene-1-carboxylate (SHCHC) to 2-succinylbenzoate (OSB). This is o-succinylbenzoate synthase from Escherichia coli O6:K15:H31 (strain 536 / UPEC).